Here is a 179-residue protein sequence, read N- to C-terminus: Large ribosomal subunit protein uL6 (179 aa).

Belongs to the universal ribosomal protein uL6 family. In terms of assembly, part of the 50S ribosomal subunit.

Functionally, this protein binds to the 23S rRNA, and is important in its secondary structure. It is located near the subunit interface in the base of the L7/L12 stalk, and near the tRNA binding site of the peptidyltransferase center. The sequence is that of Large ribosomal subunit protein uL6 from Chlorobium phaeovibrioides (strain DSM 265 / 1930) (Prosthecochloris vibrioformis (strain DSM 265)).